The following is a 210-amino-acid chain: Ribosomal RNA large subunit methyltransferase E (210 aa).

S-adenosyl-L-methionine contacts are provided by G61, W63, D81, D97, and D122. K162 functions as the Proton acceptor in the catalytic mechanism.

This sequence belongs to the class I-like SAM-binding methyltransferase superfamily. RNA methyltransferase RlmE family.

The protein resides in the cytoplasm. The catalysed reaction is uridine(2552) in 23S rRNA + S-adenosyl-L-methionine = 2'-O-methyluridine(2552) in 23S rRNA + S-adenosyl-L-homocysteine + H(+). In terms of biological role, specifically methylates the uridine in position 2552 of 23S rRNA at the 2'-O position of the ribose in the fully assembled 50S ribosomal subunit. The sequence is that of Ribosomal RNA large subunit methyltransferase E from Xanthomonas oryzae pv. oryzae (strain MAFF 311018).